Consider the following 137-residue polypeptide: Large ribosomal subunit protein bL17 (137 aa).

This sequence belongs to the bacterial ribosomal protein bL17 family. As to quaternary structure, part of the 50S ribosomal subunit. Contacts protein L32.

The protein is Large ribosomal subunit protein bL17 of Bradyrhizobium sp. (strain ORS 278).